The chain runs to 547 residues: MDYIFLITGYKYRHLNLEAYNAKSRAIENEKRYLGNDRNLPFHREREKVESNPNSSDEEDLTSTNNTRSSDNTTSDTEDDSGEDSYQVEWESGKDPLAPKNWPMWKKIYTLLVASFIAIVITANSSIFSDGGGIAAQQYHVGATVGDLCSATFLLGFAAGSVLFAPLSEVYGRLPLYSVTLVIFVVFQIGGGCSKNIWSLVIFRFFHGFFGCTPMSACGGTISDLFNPIQRTGALLVFCAAAFVGPLVGPVMGGYITESKLGWRWDFWINMIWAGLTWVIVCFTMPETHSETLLDFKARYLRKKTNCDKWYNEHEHQRDPAYAIRTALTRGVRLLCTEPIVQAFCMYLVFINILLYICMVGYPLIFYQYGFNAGEVGLAILGILVGILLGLALTPIIYVHYRRRYEMRDGNICPEDRLFPLFFGSFFIPIALFWLGWTCYPSVHWAAPMVSGIFLGWGFLYVLAVCYSYLVDCYHEMAASALSVATFTRYAAGGGMTIVARPMYNNLNYHWATSLLAFVGCGLVPIPFIFFFWGRRIRQRSPHAYKG.

Residues 38 to 50 are compositionally biased toward basic and acidic residues; sequence RNLPFHREREKVE. Positions 38–89 are disordered; that stretch reads RNLPFHREREKVESNPNSSDEEDLTSTNNTRSSDNTTSDTEDDSGEDSYQVE. Positions 62-75 are enriched in low complexity; that stretch reads TSTNNTRSSDNTTS. 12 consecutive transmembrane segments (helical) span residues 108–128, 148–168, 174–194, 197–217, 233–253, 265–285, 346–366, 377–397, 418–438, 445–465, 478–500, and 514–534; these read IYTL…SSIF, LCSA…APLS, LPLY…GGCS, IWSL…PMSA, GALL…PVMG, WDFW…CFTM, MYLV…PLIF, GLAI…TPII, LFPL…LGWT, WAAP…VLAV, AASA…TIVA, and SLLA…FFWG.

Belongs to the major facilitator superfamily. CAR1 family.

It localises to the membrane. This is an uncharacterized protein from Schizosaccharomyces pombe (strain 972 / ATCC 24843) (Fission yeast).